The following is a 567-amino-acid chain: Allo-aromadendrene synthase TPS4FN (567 aa).

The (2E,6E)-farnesyl diphosphate site is built by arginine 282, aspartate 319, aspartate 323, arginine 462, and aspartate 465. Residues aspartate 319 and aspartate 323 each contribute to the Mg(2+) site. The DDXXD motif motif lies at 319-323; that stretch reads DDIYD. Aspartate 465 and glutamate 473 together coordinate Mg(2+).

The protein belongs to the terpene synthase family. Tpsb subfamily. Mg(2+) is required as a cofactor. It depends on Mn(2+) as a cofactor.

It carries out the reaction (2E,6E)-farnesyl diphosphate = alpha-humulene + diphosphate. The catalysed reaction is (2E,6E)-farnesyl diphosphate = (+)-valencene + diphosphate. It catalyses the reaction (2E)-geranyl diphosphate = beta-myrcene + diphosphate. The enzyme catalyses (2E,6E)-farnesyl diphosphate = allo-aromadendrene + diphosphate. It carries out the reaction (2E,6E)-farnesyl diphosphate + H2O = palustrol + diphosphate. It participates in secondary metabolite biosynthesis; terpenoid biosynthesis. Its function is as follows. Involved in sesquiterpene olefins biosynthesis, constituants of cannabinoids and terpenoids-rich resins. Catalyzes mainly the conversion of (2E)-farnesyl diphosphate to allo-aromadendrene, and also produces minor products such as alpha-humulene, valencene and palustrol. Can also use (2E)-geranyl diphosphate as substrate with low efficiency, producing minor amounts of myrcene. In Cannabis sativa (Hemp), this protein is Allo-aromadendrene synthase TPS4FN.